The primary structure comprises 528 residues: Potassium voltage-gated channel subfamily A member 3 (528 aa).

Residues 1–32 (MTVVPGDHLLEPEAAGGGGGDPPQGGCGSGGG) are disordered. At 1–187 (MTVVPGDHLL…EYPESSGPAR (187 aa)) the chain is on the cytoplasmic side. Residues 15–32 (AGGGGGDPPQGGCGSGGG) show a composition bias toward gly residues. A helical membrane pass occupies residues 188–206 (GIAIVSVLVILISIVIFCL). Residues 207 to 247 (ETLPEFRDEKDYPASPSQDVFEAANNSTSGAPSGASSFSDP) lie on the Extracellular side of the membrane. Residue Asn-232 is glycosylated (N-linked (GlcNAc...) asparagine). A helical transmembrane segment spans residues 248-269 (FFVVETLCIIWFSFELLVRFFA). Cys-270 carries S-palmitoyl cysteine lipidation. Topologically, residues 270 to 280 (CPSKATFSRNI) are cytoplasmic. Residues 281 to 301 (MNLIDIVAIIPYFITLGTELA) form a helical membrane-spanning segment. Residues 302–315 (ERQGNGQQAMSLAI) are Extracellular-facing. A helical; Voltage-sensor transmembrane segment spans residues 316–334 (LRVIRLVRVFRIFKLSRHS). Over 335–350 (KGLQILGQTLKASMRE) the chain is Cytoplasmic. The chain crosses the membrane as a helical span at residues 351-370 (LGLLIFFLFIGVILFSSAVY). Over 371–411 (FAEADDPSSGFNSIPDAFWWAVVTMTTVGYGDMHPVTIGGK) the chain is Extracellular. A Selectivity filter motif is present at residues 397–402 (TVGYGD). A helical membrane pass occupies residues 412–434 (IVGSLCAIAGVLTIALPVPVIVS). Topologically, residues 435–528 (NFNYFYHRET…VNIKKIFTDV (94 aa)) are cytoplasmic. An interaction with KCNE4 region spans residues 435–528 (NFNYFYHRET…VNIKKIFTDV (94 aa)). Phosphotyrosine is present on Tyr-452. The residue at position 473 (Ser-473) is a Phosphoserine; by PKA. Residues 526–528 (TDV) carry the PDZ-binding motif.

It belongs to the potassium channel family. A (Shaker) (TC 1.A.1.2) subfamily. Kv1.3/KCNA3 sub-subfamily. Homotetramer. Forms heterooligomers with KCNE4 which inhibits KCNA3 activity by impairing localization to the cell membrane. The stoichiometry of KCNA3 and KCNE4 in the heterooligomers are 4:1, 4:2, 4:3 or 4:4 respectively. Increasing the number of KCNE4 subunits steadily slows the activation KCNA3 and decreases its abundance at the cell membrane. However, a single subunit of KCNE4 is sufficient for the cooperative enhancement of the inactivating function of the channel. Interacts with SEC24D; this interaction is reduced in the presence of KCNE4. Interacts with DLG1, DLG2 and DLG4 via their PDZ domains. Post-translationally, N-glycosylation promotes the cell surface expression. Phosphorylation on Tyr-452 inhibits its channel activity.

It localises to the cell membrane. The catalysed reaction is K(+)(in) = K(+)(out). Its activity is regulated as follows. Activity is up-regulated by JAK2. Mediates the voltage-dependent potassium ion permeability of excitable membranes. Assuming opened or closed conformations in response to the voltage difference across the membrane, the protein forms a potassium-selective channel through which potassium ions may pass in accordance with their electrochemical gradient. This is Potassium voltage-gated channel subfamily A member 3 (Kcna3) from Mus musculus (Mouse).